Consider the following 475-residue polypeptide: Ribulose bisphosphate carboxylase large chain (475 aa).

Residues methionine 1–serine 2 constitute a propeptide that is removed on maturation. At proline 3 the chain carries N-acetylproline. An N6,N6,N6-trimethyllysine modification is found at lysine 14. Substrate contacts are provided by asparagine 123 and threonine 173. The active-site Proton acceptor is the lysine 175. Lysine 177 is a substrate binding site. Mg(2+)-binding residues include lysine 201, aspartate 203, and glutamate 204. Lysine 201 carries the N6-carboxylysine modification. The Proton acceptor role is filled by histidine 294. Residues arginine 295, histidine 327, and serine 379 each coordinate substrate.

Belongs to the RuBisCO large chain family. Type I subfamily. As to quaternary structure, heterohexadecamer of 8 large chains and 8 small chains; disulfide-linked. The disulfide link is formed within the large subunit homodimers. Mg(2+) is required as a cofactor. In terms of processing, the disulfide bond which can form in the large chain dimeric partners within the hexadecamer appears to be associated with oxidative stress and protein turnover.

The protein resides in the plastid. It is found in the chloroplast. It catalyses the reaction 2 (2R)-3-phosphoglycerate + 2 H(+) = D-ribulose 1,5-bisphosphate + CO2 + H2O. The catalysed reaction is D-ribulose 1,5-bisphosphate + O2 = 2-phosphoglycolate + (2R)-3-phosphoglycerate + 2 H(+). Its function is as follows. RuBisCO catalyzes two reactions: the carboxylation of D-ribulose 1,5-bisphosphate, the primary event in carbon dioxide fixation, as well as the oxidative fragmentation of the pentose substrate in the photorespiration process. Both reactions occur simultaneously and in competition at the same active site. The sequence is that of Ribulose bisphosphate carboxylase large chain from Carpinus caroliniana (American hornbeam).